Reading from the N-terminus, the 237-residue chain is Lipoprotein-releasing system ATP-binding protein LolD (237 aa).

In terms of domain architecture, ABC transporter spans leucine 16–alanine 237. Glycine 52–threonine 59 serves as a coordination point for ATP.

It belongs to the ABC transporter superfamily. Lipoprotein translocase (TC 3.A.1.125) family. The complex is composed of two ATP-binding proteins (LolD) and two transmembrane proteins (LolC and LolE).

Its subcellular location is the cell inner membrane. Part of the ABC transporter complex LolCDE involved in the translocation of mature outer membrane-directed lipoproteins, from the inner membrane to the periplasmic chaperone, LolA. Responsible for the formation of the LolA-lipoprotein complex in an ATP-dependent manner. This is Lipoprotein-releasing system ATP-binding protein LolD from Chromohalobacter salexigens (strain ATCC BAA-138 / DSM 3043 / CIP 106854 / NCIMB 13768 / 1H11).